The sequence spans 254 residues: Ribosomal RNA small subunit methyltransferase J (254 aa).

S-adenosyl-L-methionine-binding positions include 101 to 102 (RD), 117 to 118 (ER), 153 to 154 (SS), and aspartate 171.

Belongs to the methyltransferase superfamily. RsmJ family.

The protein resides in the cytoplasm. The catalysed reaction is guanosine(1516) in 16S rRNA + S-adenosyl-L-methionine = N(2)-methylguanosine(1516) in 16S rRNA + S-adenosyl-L-homocysteine + H(+). Specifically methylates the guanosine in position 1516 of 16S rRNA. In Enterobacter sp. (strain 638), this protein is Ribosomal RNA small subunit methyltransferase J.